The primary structure comprises 497 residues: Mechanosensitive ion channel protein 1, mitochondrial (497 aa).

Residues 1 to 86 (MAGVRLSLLK…RAFSSKSDDF (86 aa)) constitute a mitochondrion transit peptide. 5 consecutive transmembrane segments (helical) span residues 152-172 (DVIV…VVMP), 216-236 (LVTF…TIAA), 238-258 (YFSP…LYRW), 280-300 (VLTL…MASA), and 305-325 (VAVQ…AFAA).

Belongs to the MscS (TC 1.A.23) family.

It localises to the mitochondrion membrane. Its function is as follows. Mechanosensitive channel that opens in response to stretch forces in the membrane lipid bilayer. In Arabidopsis thaliana (Mouse-ear cress), this protein is Mechanosensitive ion channel protein 1, mitochondrial (MSL1).